A 325-amino-acid chain; its full sequence is Large ribosomal subunit protein uL4m (325 aa).

A disordered region spans residues 113–158; the sequence is ASTKTRYEVHGSHKKMSPQKGTGNARRGTRQSPLMKGGGKTFGPKP.

This sequence belongs to the universal ribosomal protein uL4 family. In terms of assembly, component of the mitochondrial large ribosomal subunit (mt-LSU). Mature N.crassa 74S mitochondrial ribosomes consist of a small (37S) and a large (54S) subunit. The 37S small subunit contains a 16S ribosomal RNA (16S mt-rRNA) and 32 different proteins. The 54S large subunit contains a 23S rRNA (23S mt-rRNA) and 42 different proteins.

Its subcellular location is the mitochondrion. In terms of biological role, component of the mitochondrial ribosome (mitoribosome), a dedicated translation machinery responsible for the synthesis of mitochondrial genome-encoded proteins, including at least some of the essential transmembrane subunits of the mitochondrial respiratory chain. The mitoribosomes are attached to the mitochondrial inner membrane and translation products are cotranslationally integrated into the membrane. In Neurospora crassa (strain ATCC 24698 / 74-OR23-1A / CBS 708.71 / DSM 1257 / FGSC 987), this protein is Large ribosomal subunit protein uL4m (yml6).